The chain runs to 69 residues: Snake venom metalloproteinase BnP2 (69 aa).

Residues 1–69 enclose the Peptidase M12B domain; sequence YIELAVVADH…EWRERDIIPR (69 aa). Ca(2+) is bound at residue Glu-3.

The protein belongs to the venom metalloproteinase (M12B) family. P-I subfamily. Monomer. Zn(2+) is required as a cofactor. In terms of tissue distribution, expressed by the venom gland.

The protein resides in the secreted. Its activity is regulated as follows. Inhibited by EDTA. This protein is a zinc protease from snake venom that is devoid of significant myotoxic and hemorrhagic activities. It hydrolyzes the Aalpha-chain and more slowly the Bbeta-chain of fibrin and fibrinogen, without affecting the gamma-chains. It induces cell detachment and a apoptosis (anoikis) in endothelial cells. The protein is Snake venom metalloproteinase BnP2 of Bothrops pauloensis (Neuwied's lancehead).